We begin with the raw amino-acid sequence, 536 residues long: Trigger factor (536 aa).

Residues 164–249 (GDQVIIDFAG…VKEVKVPAAT (86 aa)) enclose the PPIase FKBP-type domain. The interval 439–536 (IEADDDSGHV…APAKKAAAKK (98 aa)) is disordered. Residues 472-502 (TKKEAVKDEAKAEEAPAKKAPAKKAEPKAEA) show a composition bias toward basic and acidic residues. A compositionally biased stretch (low complexity) spans 503-515 (KPAAAKKAAPAKA). Residues 516–525 (AAEEKAEPAK) show a composition bias toward basic and acidic residues. The segment covering 527 to 536 (APAKKAAAKK) has biased composition (basic residues).

This sequence belongs to the FKBP-type PPIase family. Tig subfamily.

The protein resides in the cytoplasm. The catalysed reaction is [protein]-peptidylproline (omega=180) = [protein]-peptidylproline (omega=0). Involved in protein export. Acts as a chaperone by maintaining the newly synthesized protein in an open conformation. Functions as a peptidyl-prolyl cis-trans isomerase. The protein is Trigger factor of Sphingopyxis alaskensis (strain DSM 13593 / LMG 18877 / RB2256) (Sphingomonas alaskensis).